The following is a 445-amino-acid chain: 3-phosphoshikimate 1-carboxyvinyltransferase (445 aa).

The tract at residues 1 to 24 is disordered; that stretch reads MEHAATLPQTSRRPATPLTGTITV. Residues 7-22 are compositionally biased toward polar residues; it reads LPQTSRRPATPLTGTI. Positions 28, 29, and 33 each coordinate 3-phosphoshikimate. Lys28 is a binding site for phosphoenolpyruvate. Positions 101 and 129 each coordinate phosphoenolpyruvate. Residues Ser174, Gln176, Asp326, and Lys353 each coordinate 3-phosphoshikimate. Gln176 serves as a coordination point for phosphoenolpyruvate. Asp326 serves as the catalytic Proton acceptor. Residues Arg357 and Arg399 each coordinate phosphoenolpyruvate.

It belongs to the EPSP synthase family. In terms of assembly, monomer.

It localises to the cytoplasm. It carries out the reaction 3-phosphoshikimate + phosphoenolpyruvate = 5-O-(1-carboxyvinyl)-3-phosphoshikimate + phosphate. The protein operates within metabolic intermediate biosynthesis; chorismate biosynthesis; chorismate from D-erythrose 4-phosphate and phosphoenolpyruvate: step 6/7. Catalyzes the transfer of the enolpyruvyl moiety of phosphoenolpyruvate (PEP) to the 5-hydroxyl of shikimate-3-phosphate (S3P) to produce enolpyruvyl shikimate-3-phosphate and inorganic phosphate. The chain is 3-phosphoshikimate 1-carboxyvinyltransferase from Acidiphilium cryptum (strain JF-5).